Here is a 313-residue protein sequence, read N- to C-terminus: Aspartate carbamoyltransferase catalytic subunit (313 aa).

Arg-58 and Thr-59 together coordinate carbamoyl phosphate. Lys-86 serves as a coordination point for L-aspartate. Positions 108, 136, and 139 each coordinate carbamoyl phosphate. L-aspartate contacts are provided by Arg-169 and Arg-223. The carbamoyl phosphate site is built by Gly-264 and Pro-265.

It belongs to the aspartate/ornithine carbamoyltransferase superfamily. ATCase family. In terms of assembly, heterododecamer (2C3:3R2) of six catalytic PyrB chains organized as two trimers (C3), and six regulatory PyrI chains organized as three dimers (R2).

It carries out the reaction carbamoyl phosphate + L-aspartate = N-carbamoyl-L-aspartate + phosphate + H(+). Its pathway is pyrimidine metabolism; UMP biosynthesis via de novo pathway; (S)-dihydroorotate from bicarbonate: step 2/3. Catalyzes the condensation of carbamoyl phosphate and aspartate to form carbamoyl aspartate and inorganic phosphate, the committed step in the de novo pyrimidine nucleotide biosynthesis pathway. This chain is Aspartate carbamoyltransferase catalytic subunit, found in Syntrophotalea carbinolica (strain DSM 2380 / NBRC 103641 / GraBd1) (Pelobacter carbinolicus).